Consider the following 154-residue polypeptide: Peptidoglycan amidase Tse1 (154 aa).

A disulfide bridge links Cys-7 with Cys-148. The Nucleophile role is filled by Cys-30. His-91 acts as the Proton acceptor in catalysis.

In terms of assembly, forms a heterotetramer with Tsi1 consisting of two Tse1 dimers and two Tsi1 dimers. Formation of the complex inactivates Tse1 enzymatic activity.

Its subcellular location is the host membrane. It is found in the secreted. It catalyses the reaction Hydrolysis of gamma-D-glutamyl bonds to the L-terminus (position 7) of meso-diaminopimelic acid (meso-A2pm) in 7-(L-Ala-gamma-D-Glu)-meso-A2pm and 7-(L-Ala-gamma-D-Glu)-7-(D-Ala)-meso-A2pm. It is required that the D-terminal amino and carboxy groups of meso-A2pm are unsubstituted.. Functionally, toxin secreted by the H1 type VI (H1-T6SS) secretion system into the periplasm of recipient cells. Degrades peptidoglycan via amidase activity thereby helping itself to compete with other bacteria. To protect itself, the bacterium synthesizes immunity protein Tsi1 that specifically interacts with and inactivates cognate toxin. This is Peptidoglycan amidase Tse1 from Pseudomonas aeruginosa (strain ATCC 15692 / DSM 22644 / CIP 104116 / JCM 14847 / LMG 12228 / 1C / PRS 101 / PAO1).